The chain runs to 1379 residues: DNA-directed RNA polymerase subunit beta (1379 aa).

This sequence belongs to the RNA polymerase beta chain family. As to quaternary structure, in plastids the minimal PEP RNA polymerase catalytic core is composed of four subunits: alpha, beta, beta', and beta''. When a (nuclear-encoded) sigma factor is associated with the core the holoenzyme is formed, which can initiate transcription.

Its subcellular location is the plastid. The protein resides in the chloroplast. It catalyses the reaction RNA(n) + a ribonucleoside 5'-triphosphate = RNA(n+1) + diphosphate. Functionally, DNA-dependent RNA polymerase catalyzes the transcription of DNA into RNA using the four ribonucleoside triphosphates as substrates. In Trieres chinensis (Marine centric diatom), this protein is DNA-directed RNA polymerase subunit beta.